A 213-amino-acid polypeptide reads, in one-letter code: Nicotinate-nucleotide adenylyltransferase (213 aa).

This sequence belongs to the NadD family.

It catalyses the reaction nicotinate beta-D-ribonucleotide + ATP + H(+) = deamido-NAD(+) + diphosphate. It participates in cofactor biosynthesis; NAD(+) biosynthesis; deamido-NAD(+) from nicotinate D-ribonucleotide: step 1/1. Functionally, catalyzes the reversible adenylation of nicotinate mononucleotide (NaMN) to nicotinic acid adenine dinucleotide (NaAD). The sequence is that of Nicotinate-nucleotide adenylyltransferase from Salmonella typhimurium (strain LT2 / SGSC1412 / ATCC 700720).